Consider the following 409-residue polypeptide: All trans-polyprenyl-diphosphate synthase PDSS1 (409 aa).

Lys128, Arg131, and His167 together coordinate isopentenyl diphosphate. Mg(2+) is bound by residues Asp174 and Asp178. Arg184 serves as a coordination point for isopentenyl diphosphate.

The protein belongs to the FPP/GGPP synthase family. Heterotetramer composed of 2 PDSS1/DPS1 and 2 PDSS2/DLP1 subunits. Requires Mg(2+) as cofactor.

It is found in the mitochondrion. It catalyses the reaction 7 isopentenyl diphosphate + (2E,6E)-farnesyl diphosphate = all-trans-decaprenyl diphosphate + 7 diphosphate. The enzyme catalyses 6 isopentenyl diphosphate + (2E,6E)-farnesyl diphosphate = all-trans-nonaprenyl diphosphate + 6 diphosphate. Its pathway is cofactor biosynthesis; ubiquinone biosynthesis. Its function is as follows. Heterotetrameric enzyme that catalyzes the condensation of farnesyl diphosphate (FPP), which acts as a primer, and isopentenyl diphosphate (IPP) to produce prenyl diphosphates of varying chain lengths and participates in the determination of the side chain of ubiquinone. Supplies nona and decaprenyl diphosphate, the precursors for the side chain of the isoprenoid quinones ubiquinone-9 (Q9)and ubiquinone-10 (Q10) respectively. The enzyme adds isopentenyl diphosphate molecules sequentially to farnesyl diphosphate with trans stereochemistry. The polypeptide is All trans-polyprenyl-diphosphate synthase PDSS1 (Mus musculus (Mouse)).